Reading from the N-terminus, the 215-residue chain is Jasmonate monooxygenase ABM (215 aa).

Positions 2–90 (FAVIFETRPQ…GVLEDYHLRV (89 aa)) constitute an ABM domain.

Its subcellular location is the endoplasmic reticulum. It localises to the secreted. It carries out the reaction jasmonate + NADPH + O2 + H(+) = (1R,2R)-12-hydroxyjasmonate + NADP(+) + H2O. In terms of biological role, monooxygenase that converts the endogenous (and likely the host) jasmonate (JA) to its hydroxylated derivative 12-hydroxyjasmonate (12OH-JA), also known as tuberonic acid, a compound that attenuates or disables jasmonate-based host innate immunity and which is essential for proper initiation and elaboration of the blast disease in rice. ABM, together with a polyketide synthase MGG_04775 and the esterase MGG_04774, share the secondary metabolism gene cluster with ABC transporter ABC3, and therefore may also be involved in the synthesis of other important metabolites such as the ABC3 transporter efflux substrate (ATS) and/or additional polyketides. In Pyricularia oryzae (strain 70-15 / ATCC MYA-4617 / FGSC 8958) (Rice blast fungus), this protein is Jasmonate monooxygenase ABM.